Reading from the N-terminus, the 757-residue chain is Polyribonucleotide nucleotidyltransferase (757 aa).

Residues Asp-489 and Asp-495 each coordinate Mg(2+). The region spanning 556–615 (PKILCYKIDKDVVHKVIGSGGKTIRGISSDTSAKIDIDQNNYVYIMADTEEALMEAKTRV) is the KH domain. Positions 632-700 (GELYDGKIVS…SDGKIKLTMR (69 aa)) constitute an S1 motif domain. Residues 702–757 (DEDRVGSGGSSSSPKKRFGAHPRKNGKDNRSNNSERGFNERSGSAEGSSISRKRFF) are disordered. Over residues 715 to 725 (PKKRFGAHPRK) the composition is skewed to basic residues. The segment covering 732–751 (SNNSERGFNERSGSAEGSSI) has biased composition (polar residues).

The protein belongs to the polyribonucleotide nucleotidyltransferase family. Mg(2+) is required as a cofactor.

It localises to the cytoplasm. The catalysed reaction is RNA(n+1) + phosphate = RNA(n) + a ribonucleoside 5'-diphosphate. In terms of biological role, involved in mRNA degradation. Catalyzes the phosphorolysis of single-stranded polyribonucleotides processively in the 3'- to 5'-direction. The protein is Polyribonucleotide nucleotidyltransferase of Neorickettsia sennetsu (strain ATCC VR-367 / Miyayama) (Ehrlichia sennetsu).